The chain runs to 566 residues: Transcription factor atf1 (566 aa).

Over residues 1 to 42 (MSPSPVNTSTEPASVAAVSNGNATASSTQVPENNQSDSFAPP) the composition is skewed to polar residues. Disordered regions lie at residues 1 to 83 (MSPS…FVGS), 96 to 117 (SFGS…PSLS), 315 to 345 (QQQT…PQAS), and 357 to 479 (SQQF…KSFL). The segment covering 43–53 (SNNSQQNQQSS) has biased composition (low complexity). 2 stretches are compositionally biased toward polar residues: residues 65–76 (ANANPADQSDGV) and 97–106 (FGSTASVGQG). Over residues 107 to 117 (NPSLNRNPSLS) the composition is skewed to low complexity. Composition is skewed to polar residues over residues 379-412 (TLRQ…TANS) and 421-460 (TDYS…YSKG). The span at 466 to 479 (SKNETDEEKRKSFL) shows a compositional bias: basic and acidic residues. Residues 472 to 535 (EEKRKSFLER…VSLKTLLIAH (64 aa)) enclose the bZIP domain. The tract at residues 474–503 (KRKSFLERNRQAALKCRQRKKQWLSNLQAK) is basic motif. The interval 514–528 (LSAQVSALREEIVSL) is leucine-zipper.

It belongs to the bZIP family. As to quaternary structure, heterodimer of pcr1/mts2 and atf1/mts1. Phosphorylated by sty1/spc1.

The protein resides in the nucleus. Functionally, transcription factor required for sexual development and entry into stationary phase. Binds and activates CRE sites (cAMP-response elements, also known as M26 meiotic recombination hotspots). The polypeptide is Transcription factor atf1 (atf1) (Schizosaccharomyces pombe (strain 972 / ATCC 24843) (Fission yeast)).